We begin with the raw amino-acid sequence, 200 residues long: Recombination protein RecR (200 aa).

The C4-type zinc finger occupies 57–72; sequence CERCRNYAQSTLCPVC. A Toprim domain is found at 80–175; that stretch reads SLVCIVATPG…GVSRIAQGVP (96 aa).

Belongs to the RecR family.

Functionally, may play a role in DNA repair. It seems to be involved in an RecBC-independent recombinational process of DNA repair. It may act with RecF and RecO. This chain is Recombination protein RecR, found in Alcanivorax borkumensis (strain ATCC 700651 / DSM 11573 / NCIMB 13689 / SK2).